The sequence spans 127 residues: MRHYEICFIVHPDQSEQVPGMVERYRAIVTAKGGSIHRLEDWGRRQLAYPIQKIHKAHYVLMNIECDGDTLNELEHSFKFNDAVLRHLTVKMKAAVTTPSPMMKEEKSKSMMPGDAAPAAPAETAAA.

The segment at 99–127 is disordered; sequence PSPMMKEEKSKSMMPGDAAPAAPAETAAA. Residues 110–127 show a composition bias toward low complexity; it reads SMMPGDAAPAAPAETAAA.

It belongs to the bacterial ribosomal protein bS6 family.

Its function is as follows. Binds together with bS18 to 16S ribosomal RNA. The chain is Small ribosomal subunit protein bS6 from Dechloromonas aromatica (strain RCB).